The sequence spans 568 residues: 2-isopropylmalate synthase (568 aa).

Residues Pro-37–Asp-313 enclose the Pyruvate carboxyltransferase domain. Residues Asp-46, His-252, His-254, and Asn-288 each coordinate Mg(2+). Positions Glu-455 to Ser-568 are regulatory domain.

It belongs to the alpha-IPM synthase/homocitrate synthase family. LeuA type 2 subfamily. Homodimer. It depends on Mg(2+) as a cofactor.

It localises to the cytoplasm. The enzyme catalyses 3-methyl-2-oxobutanoate + acetyl-CoA + H2O = (2S)-2-isopropylmalate + CoA + H(+). It functions in the pathway amino-acid biosynthesis; L-leucine biosynthesis; L-leucine from 3-methyl-2-oxobutanoate: step 1/4. Functionally, catalyzes the condensation of the acetyl group of acetyl-CoA with 3-methyl-2-oxobutanoate (2-ketoisovalerate) to form 3-carboxy-3-hydroxy-4-methylpentanoate (2-isopropylmalate). In Thermobifida fusca (strain YX), this protein is 2-isopropylmalate synthase.